We begin with the raw amino-acid sequence, 208 residues long: Imidazoleglycerol-phosphate dehydratase (208 aa).

This sequence belongs to the imidazoleglycerol-phosphate dehydratase family.

It is found in the cytoplasm. The enzyme catalyses D-erythro-1-(imidazol-4-yl)glycerol 3-phosphate = 3-(imidazol-4-yl)-2-oxopropyl phosphate + H2O. It functions in the pathway amino-acid biosynthesis; L-histidine biosynthesis; L-histidine from 5-phospho-alpha-D-ribose 1-diphosphate: step 6/9. The sequence is that of Imidazoleglycerol-phosphate dehydratase from Mycobacterium sp. (strain JLS).